The sequence spans 191 residues: dTTP/UTP pyrophosphatase (191 aa).

Aspartate 71 acts as the Proton acceptor in catalysis.

It belongs to the Maf family. YhdE subfamily. It depends on a divalent metal cation as a cofactor.

The protein resides in the cytoplasm. The enzyme catalyses dTTP + H2O = dTMP + diphosphate + H(+). The catalysed reaction is UTP + H2O = UMP + diphosphate + H(+). Functionally, nucleoside triphosphate pyrophosphatase that hydrolyzes dTTP and UTP. May have a dual role in cell division arrest and in preventing the incorporation of modified nucleotides into cellular nucleic acids. The polypeptide is dTTP/UTP pyrophosphatase (Hyphomonas neptunium (strain ATCC 15444)).